The sequence spans 340 residues: Nod factor export ATP-binding protein I (340 aa).

The span at Met1–His24 shows a compositional bias: basic and acidic residues. The tract at residues Met1–Pro34 is disordered. The span at Gly25–Pro34 shows a compositional bias: polar residues. In terms of domain architecture, ABC transporter spans Val42 to Tyr272. Gly74–Ser81 contributes to the ATP binding site.

This sequence belongs to the ABC transporter superfamily. Lipooligosaccharide exporter (TC 3.A.1.102) family. As to quaternary structure, the complex is composed of two ATP-binding proteins (NodI) and two transmembrane proteins (NodJ).

Its subcellular location is the cell inner membrane. Part of the ABC transporter complex NodIJ involved in the export of the nodulation factors (Nod factors), the bacterial signal molecules that induce symbiosis and subsequent nodulation induction. Nod factors are LCO (lipo-chitin oligosaccharide), a modified beta-1,4-linked N-acetylglucosamine oligosaccharide. This subunit is responsible for energy coupling to the transport system. In Mesorhizobium japonicum (strain LMG 29417 / CECT 9101 / MAFF 303099) (Mesorhizobium loti (strain MAFF 303099)), this protein is Nod factor export ATP-binding protein I.